A 374-amino-acid polypeptide reads, in one-letter code: MQELFNNLMELCKDSQRKFFYSDDVSASGRTYRIFSYNYASYSDWLLPDALECRGIMFEMDGEKPVRIASRPMEKFFNLNENPFTMNIDLNDVDYILTKEDGSLVSTYLDGDEILFKSKGSIKSEQALMANGILMNINHHRLRDRLKELAEDGFTANFEFVAPTNRIVLAYQEMKIILLNVRENETGEYISYDDIYKDATLRPYLVERYEIDSPKWIEEAKNAENIEGYVAVMKDGSHFKIKSDWYVSLHSTKSSLDNPEKLFKTIIDGASDDLKAMYADDEYSYRKIEAFETTYLKYLDRALFLVLDCHNKHCGKDRKTYAMEAQGVAKGAGMDHLFGIIMSLYQGYDSQEKVMCEIEQNFLKNYKKFIPEGY.

Residues Y37, R54, and K75 each contribute to the ATP site. The N6-AMP-lysine intermediate role is filled by K99. 3 residues coordinate ATP: E159, K240, and K242. Position 272 (D272) interacts with Mg(2+).

This sequence belongs to the Tequatrovirus RNA ligase 1 family. Mg(2+) is required as a cofactor.

It catalyses the reaction ATP + (ribonucleotide)n-3'-hydroxyl + 5'-phospho-(ribonucleotide)m = (ribonucleotide)n+m + AMP + diphosphate.. Functionally, involved in countering a host defense mechanism which, following viral infection, activates the host anticodon nuclease and shuts off viral translation. Repairs 5'-PO4 and 3'-OH groups in the cleaved host tRNA. The nick ligation reaction entails three nucleotidyl transfer steps. In the first step, the RNA ligase reacts with ATP in the absence of nucleic acid to form a covalent ligase-AMP intermediate and release pyrophosphate. In step 2, the ligase-AMP binds to the nicked duplex nucleic acid and transfers the adenylate to the 5'-PO4 terminus to form an adenylylated nicked intermediate. In step 3, the RNA ligase directs the attack of the nick 3'-OH on the 5'-phosphoanhydride linkage, resulting in a repaired 3'-5' phosphodiester and release of AMP. The protein is RNA ligase 1 (63) of Enterobacteria phage T4 (Bacteriophage T4).